The sequence spans 293 residues: uncharacterized protein (293 aa).

2 disordered regions span residues 121 to 154 (NLNF…SQNS) and 254 to 274 (DILQ…PQQQ). Residues 133 to 149 (SYHHHSHSHSHHSHSHS) show a composition bias toward basic residues. Over residues 260-272 (PPSPTPTPPPPPQ) the composition is skewed to pro residues.

This is an uncharacterized protein from Dictyostelium discoideum (Social amoeba).